The chain runs to 350 residues: tRNA uridine(34) hydroxylase (350 aa).

The 95-residue stretch at 146–240 (DDPDAVFIDM…YARRAREQGL (95 aa)) folds into the Rhodanese domain. Cys-200 serves as the catalytic Cysteine persulfide intermediate. The span at 319-328 (RRRRAGRENG) shows a compositional bias: basic and acidic residues. The segment at 319-350 (RRRRAGRENGNKIFNKSRGRLNSKLSIPDPAE) is disordered.

The protein belongs to the TrhO family.

The enzyme catalyses uridine(34) in tRNA + AH2 + O2 = 5-hydroxyuridine(34) in tRNA + A + H2O. Functionally, catalyzes oxygen-dependent 5-hydroxyuridine (ho5U) modification at position 34 in tRNAs. The chain is tRNA uridine(34) hydroxylase from Salmonella gallinarum (strain 287/91 / NCTC 13346).